A 559-amino-acid chain; its full sequence is Forkhead box protein O6 (559 aa).

Disordered regions lie at residues 1–77 and 163–183; these read MAAK…VGPL and SWWM…RRAV. A DNA-binding region (fork-head) is located at residues 88-182; sequence WGNLSYADLI…KTGKTPRRRA (95 aa). Residue Ser-184 is modified to Phosphoserine. Disordered stretches follow at residues 197–232 and 534–559; these read KASK…KWAA and NFDS…WVPG. Pro residues-rich tracts occupy residues 213–222 and 539–553; these read DSPPGAPVPG and LPPP…PPPN.

Post-translationally, phosphorylation of Ser-184 is be important in regulating the transacriptional activity. As to expression, expressed in brain in areas of the nucleus accumbens, cingulate cortex, parts of the amygdala and in the hippocampus.

The protein resides in the cytoplasm. It localises to the nucleus. Its function is as follows. Transcriptional activator. This chain is Forkhead box protein O6 (Foxo6), found in Mus musculus (Mouse).